We begin with the raw amino-acid sequence, 444 residues long: UDP-N-acetylmuramate--L-alanine ligase (444 aa).

Position 110-116 (110-116 (GAHGKTS)) interacts with ATP.

The protein belongs to the MurCDEF family.

The protein resides in the cytoplasm. It carries out the reaction UDP-N-acetyl-alpha-D-muramate + L-alanine + ATP = UDP-N-acetyl-alpha-D-muramoyl-L-alanine + ADP + phosphate + H(+). The protein operates within cell wall biogenesis; peptidoglycan biosynthesis. Its function is as follows. Cell wall formation. The protein is UDP-N-acetylmuramate--L-alanine ligase of Streptococcus pneumoniae (strain JJA).